Here is a 2299-residue protein sequence, read N- to C-terminus: Protein Ycf2 (2299 aa).

An ATP-binding site is contributed by 1642–1649; the sequence is GSIGTGRS.

The protein belongs to the Ycf2 family.

Its subcellular location is the plastid. The protein resides in the chloroplast stroma. In terms of biological role, probable ATPase of unknown function. Its presence in a non-photosynthetic plant (Epifagus virginiana) and experiments in tobacco indicate that it has an essential function which is probably not related to photosynthesis. The sequence is that of Protein Ycf2 from Nandina domestica (Heavenly bamboo).